Consider the following 30-residue polypeptide: Dermaseptin-3.4TR (30 aa).

Expressed by the skin glands.

It localises to the secreted. Functionally, has antimicrobial activity. This Phyllomedusa trinitatis (Trinidad leaf frog) protein is Dermaseptin-3.4TR.